A 152-amino-acid chain; its full sequence is UPF0225 protein KPK_2103 (152 aa).

It belongs to the UPF0225 family.

This is UPF0225 protein KPK_2103 from Klebsiella pneumoniae (strain 342).